The following is a 322-amino-acid chain: NADH-quinone oxidoreductase subunit H (322 aa).

Helical transmembrane passes span 12 to 32 (IGKALIVLVGIVGAGAFMSFI), 79 to 99 (IFILAPIIAFTAFILAFAVVP), 111 to 131 (VGLLYILAIAGLAVYAVLFAG), 151 to 171 (LSYEVFLGLSLMGIVIQTGSF), 183 to 203 (LWNVVPQFLGFITFLFAGVAV), 234 to 254 (FFVGEYIGIVLISSLIVTLFF), 262 to 282 (LPPFFWFALKTACFMVFFILL), and 301 to 321 (VCLPLTLINMLITAAVVLMNV).

Belongs to the complex I subunit 1 family. NDH-1 is composed of 13 different subunits. Subunits NuoA, H, J, K, L, M, N constitute the membrane sector of the complex.

It is found in the cell inner membrane. It catalyses the reaction a quinone + NADH + 5 H(+)(in) = a quinol + NAD(+) + 4 H(+)(out). Functionally, NDH-1 shuttles electrons from NADH, via FMN and iron-sulfur (Fe-S) centers, to quinones in the respiratory chain. The immediate electron acceptor for the enzyme in this species is believed to be ubiquinone. Couples the redox reaction to proton translocation (for every two electrons transferred, four hydrogen ions are translocated across the cytoplasmic membrane), and thus conserves the redox energy in a proton gradient. This subunit may bind ubiquinone. This Shewanella oneidensis (strain ATCC 700550 / JCM 31522 / CIP 106686 / LMG 19005 / NCIMB 14063 / MR-1) protein is NADH-quinone oxidoreductase subunit H.